Here is a 206-residue protein sequence, read N- to C-terminus: Imidazoleglycerol-phosphate dehydratase (206 aa).

Belongs to the imidazoleglycerol-phosphate dehydratase family.

The protein resides in the cytoplasm. It carries out the reaction D-erythro-1-(imidazol-4-yl)glycerol 3-phosphate = 3-(imidazol-4-yl)-2-oxopropyl phosphate + H2O. It functions in the pathway amino-acid biosynthesis; L-histidine biosynthesis; L-histidine from 5-phospho-alpha-D-ribose 1-diphosphate: step 6/9. This chain is Imidazoleglycerol-phosphate dehydratase, found in Saccharopolyspora erythraea (strain ATCC 11635 / DSM 40517 / JCM 4748 / NBRC 13426 / NCIMB 8594 / NRRL 2338).